Consider the following 511-residue polypeptide: Bifunctional purine biosynthesis protein PurH (511 aa).

In terms of domain architecture, MGS-like spans 1–145 (MKKRALVSVS…KNHKFVSVIV (145 aa)).

It belongs to the PurH family.

It catalyses the reaction (6R)-10-formyltetrahydrofolate + 5-amino-1-(5-phospho-beta-D-ribosyl)imidazole-4-carboxamide = 5-formamido-1-(5-phospho-D-ribosyl)imidazole-4-carboxamide + (6S)-5,6,7,8-tetrahydrofolate. The catalysed reaction is IMP + H2O = 5-formamido-1-(5-phospho-D-ribosyl)imidazole-4-carboxamide. Its pathway is purine metabolism; IMP biosynthesis via de novo pathway; 5-formamido-1-(5-phospho-D-ribosyl)imidazole-4-carboxamide from 5-amino-1-(5-phospho-D-ribosyl)imidazole-4-carboxamide (10-formyl THF route): step 1/1. It participates in purine metabolism; IMP biosynthesis via de novo pathway; IMP from 5-formamido-1-(5-phospho-D-ribosyl)imidazole-4-carboxamide: step 1/1. The protein is Bifunctional purine biosynthesis protein PurH of Bacillus cereus (strain 03BB102).